We begin with the raw amino-acid sequence, 136 residues long: Invertebrate-type lysozyme (136 aa).

An N-terminal signal peptide occupies residues methionine 1–aspartate 11. One can recognise an I-type lysozyme domain in the interval proline 14–cysteine 130. 7 cysteine pairs are disulfide-bonded: cysteine 21/cysteine 98, cysteine 24/cysteine 130, cysteine 26/cysteine 33, cysteine 38/cysteine 47, cysteine 60/cysteine 80, cysteine 70/cysteine 76, and cysteine 94/cysteine 112. Catalysis depends on glutamate 29, which acts as the Proton donor. The active-site Nucleophile is the aspartate 41. Lysine 53–aspartate 59 serves as a coordination point for substrate. A glycan (N-linked (GlcNAc...) asparagine) is linked at asparagine 75. Substrate-binding positions include tyrosine 84, tyrosine 92, histidine 105–glycine 107, and lysine 119.

In terms of assembly, homodimer in its autoinhibited state. Active as monomer.

It is found in the secreted. It catalyses the reaction Hydrolysis of (1-&gt;4)-beta-linkages between N-acetylmuramic acid and N-acetyl-D-glucosamine residues in a peptidoglycan and between N-acetyl-D-glucosamine residues in chitodextrins.. Its activity is regulated as follows. Chitinase activity is activated by high salt concentrations which cause the release of the monomer from the autoinhibited homodimer. Its function is as follows. Bacteriolytic activity against Gram-positive bacterium M.luteus and thereby probably protects against bacterial infection. Also has chitinase activity. May act as an ispopeptidase, cleaving isopeptide bonds between the side chains of Lys and Gln residues in proteins or in the cross-linking peptide of peptidoglycan in bacterial cell walls. This is Invertebrate-type lysozyme from Ruditapes philippinarum (Japanese carpet shell).